The chain runs to 652 residues: Carboxypeptidase S1 homolog A (652 aa).

The N-terminal stretch at 1–19 (MRLAASIAVALPVIGAASA) is a signal peptide. Cysteines 50 and 121 form a disulfide. 6 N-linked (GlcNAc...) asparagine glycosylation sites follow: N77, N132, N161, N168, N184, and N202. The active site involves S238. Residues N260, N299, N347, and N410 are each glycosylated (N-linked (GlcNAc...) asparagine). Intrachain disulfides connect C325–C361 and C332–C354. D458 is an active-site residue. Position 461 (C461) interacts with substrate. N-linked (GlcNAc...) asparagine glycans are attached at residues N474, N492, and N505. H516 is an active-site residue. Residue E517 participates in substrate binding. N594 carries N-linked (GlcNAc...) asparagine glycosylation. The disordered stretch occupies residues 608–628 (AASKGNPPPTTTSSPTASPTA). A compositionally biased stretch (low complexity) spans 618 to 628 (TTSSPTASPTA). G629 is lipidated: GPI-anchor amidated glycine. Residues 630–652 (SAMLKAPVAMLAISALTVLAFYL) constitute a propeptide, removed in mature form.

It belongs to the peptidase S10 family.

The protein resides in the cell membrane. It catalyses the reaction Preferential release of a C-terminal arginine or lysine residue.. Its function is as follows. Extracellular serine carboxypeptidase that contributes to pathogenicity. In Trichophyton verrucosum (strain HKI 0517), this protein is Carboxypeptidase S1 homolog A (SCPA).